The following is a 413-amino-acid chain: 2,3-diketo-5-methylthiopentyl-1-phosphate enolase (413 aa).

Residue Lys-98 is the Proton acceptor of the active site. Substrate contacts are provided by residues Lys-147, 173–176 (KDDE), His-264, Gly-337, and 359–360 (GG). Mg(2+) is bound by residues Lys-173, Asp-175, and Glu-176. An N6-carboxylysine modification is found at Lys-173.

It belongs to the RuBisCO large chain family. Type IV subfamily. Homodimer. Requires Mg(2+) as cofactor.

It carries out the reaction 5-methylsulfanyl-2,3-dioxopentyl phosphate = 2-hydroxy-5-methylsulfanyl-3-oxopent-1-enyl phosphate. Its pathway is amino-acid biosynthesis; L-methionine biosynthesis via salvage pathway; L-methionine from S-methyl-5-thio-alpha-D-ribose 1-phosphate: step 3/6. In terms of biological role, catalyzes the enolization of 2,3-diketo-5-methylthiopentyl-1-phosphate (DK-MTP-1-P) into 2-hydroxy-3-keto-5-methylthiopentenyl-1-phosphate (HK-MTPenyl-1-P). The protein is 2,3-diketo-5-methylthiopentyl-1-phosphate enolase (mtnW) of Geobacillus kaustophilus (strain HTA426).